The chain runs to 191 residues: Succinoglycan biosynthesis protein ExoI (191 aa).

Positions 1-21 (MTRIKSAVAAGGRRAPHSARL) are disordered.

It functions in the pathway glycan metabolism; exopolysaccharide biosynthesis. This chain is Succinoglycan biosynthesis protein ExoI (exoI), found in Rhizobium meliloti (strain 1021) (Ensifer meliloti).